The chain runs to 553 residues: Putative transport protein AHA_3492 (553 aa).

Transmembrane regions (helical) follow at residues 4 to 24 (IALS…LGNW), 29 to 49 (VGLG…FAGL), 65 to 85 (FGLI…FFSS), 95 to 115 (GFAA…HQLF), and 158 to 178 (MGYA…MWLI). RCK C-terminal domains lie at 191-276 (AQFE…VLGE) and 279-361 (ETSL…VVGN). The next 6 helical transmembrane spans lie at 371 to 391 (MLPV…PFYL), 403 to 425 (AGGP…LYWF), 439 to 459 (IVLF…DTLI), 465 to 485 (AWMM…GVLA), 493 to 513 (YLTL…LAFA), and 533 to 553 (LVMF…WAGA).

It belongs to the AAE transporter (TC 2.A.81) family. YidE subfamily.

The protein resides in the cell membrane. This chain is Putative transport protein AHA_3492, found in Aeromonas hydrophila subsp. hydrophila (strain ATCC 7966 / DSM 30187 / BCRC 13018 / CCUG 14551 / JCM 1027 / KCTC 2358 / NCIMB 9240 / NCTC 8049).